Consider the following 378-residue polypeptide: Ribosomal RNA large subunit methyltransferase G (378 aa).

The protein belongs to the methyltransferase superfamily. RlmG family.

The protein localises to the cytoplasm. The enzyme catalyses guanosine(1835) in 23S rRNA + S-adenosyl-L-methionine = N(2)-methylguanosine(1835) in 23S rRNA + S-adenosyl-L-homocysteine + H(+). Functionally, specifically methylates the guanine in position 1835 (m2G1835) of 23S rRNA. The protein is Ribosomal RNA large subunit methyltransferase G of Salmonella dublin (strain CT_02021853).